Here is a 261-residue protein sequence, read N- to C-terminus: Hemin import ATP-binding protein HmuV (261 aa).

The 237-residue stretch at 7–243 (LRGQNLSLQF…EIIDAVYGYK (237 aa)) folds into the ABC transporter domain. Residue 39–46 (GPNGAGKS) participates in ATP binding.

It belongs to the ABC transporter superfamily. Heme (hemin) importer (TC 3.A.1.14.5) family. The complex is composed of two ATP-binding proteins (HmuV), two transmembrane proteins (HmuU) and a solute-binding protein (HmuT).

It is found in the cell inner membrane. Part of the ABC transporter complex HmuTUV involved in hemin import. Responsible for energy coupling to the transport system. The sequence is that of Hemin import ATP-binding protein HmuV from Vibrio vulnificus (strain CMCP6).